A 397-amino-acid polypeptide reads, in one-letter code: Odorant receptor 59a (397 aa).

The Cytoplasmic segment spans residues 1–36 (MAEVRVDSLEFFKSHWTAWRYLGVAHFRVENWKNLY). A helical membrane pass occupies residues 37–57 (VFYSIVSNLLVTLCYPVHLGI). At 58–68 (SLFRNRTITED) the chain is on the extracellular side. A glycan (N-linked (GlcNAc...) asparagine) is linked at asparagine 62. Residues 69–92 (ILNLTTFATCTACSVKCLLYAYNI) form a helical membrane-spanning segment. Residues 93–128 (KDVLEMERLLRLLDERVVGPEQRSIYGQVRVQLRNV) lie on the Cytoplasmic side of the membrane. Residues 129 to 149 (LYVFIGIYMPCALFAELSFLF) traverse the membrane as a helical segment. Over 150-179 (KEERGLMYPAWFPFDWLHSTRNYYIANAYQ) the chain is Extracellular. The helical transmembrane segment at 180-200 (IVGISFQLLQNYVSDCFPAVV) threads the bilayer. The Cytoplasmic portion of the chain corresponds to 201–274 (LCLISSHIKM…IEAFISLPML (74 aa)). The helical transmembrane segment at 275–295 (IQFTVTALNVCIGLAALVFFV) threads the bilayer. The Extracellular segment spans residues 296 to 301 (SEPMAR). A helical transmembrane segment spans residues 302–322 (MYFIFYSLAMPLQIFPSCFFG). Residues 323-372 (TDNEYWFGRLHYAAFSCNWHTQNRSFKRKMMLFVEQSLKKSTAVAGGMMR) lie on the Cytoplasmic side of the membrane. A helical transmembrane segment spans residues 373-393 (IHLDTFFSTLKGAYSLFTIII). Residues 394-397 (RMRK) are Extracellular-facing.

This sequence belongs to the insect chemoreceptor superfamily. Heteromeric odorant receptor channel (TC 1.A.69) family. Or2a subfamily. Interacts with Orco. Complexes exist early in the endomembrane system in olfactory sensory neurons (OSNs), coupling these complexes to the conserved ciliary trafficking pathway. Expressed in neurons of the third antennal segment.

The protein resides in the cell membrane. In terms of biological role, odorant receptor which mediates acceptance or avoidance behavior, depending on its substrates. The odorant receptor repertoire encodes a large collection of odor stimuli that vary widely in identity, intensity, and duration. May form a complex with Orco to form odorant-sensing units, providing sensitive and prolonged odorant signaling and calcium permeability. Involved in the behavioral responses to ethyl acetate, anisole, hexanoic acid, and pyrazines. The chain is Odorant receptor 59a (Or59a) from Drosophila melanogaster (Fruit fly).